The primary structure comprises 589 residues: Splicing factor U2af large subunit B (589 aa).

Positions 1–195 are disordered; it reads MMSYEGNGDG…KRRSGFDMAP (195 aa). Residues 14 to 27 are compositionally biased toward polar residues; that stretch reads STENHNENYISLES. Basic and acidic residues-rich tracts occupy residues 29–100 and 109–145; these read PFHE…DRQR and RDRSRERSEKRDDLDDDHHRRSRDRDRRRSRDRDREV. 2 stretches are compositionally biased toward basic residues: residues 146-156 and 164-188; these read RHRRRSRSRSR and RSEHRHKSEHRSRSRSRSRSKSKRR. RRM domains are found at residues 255-338, 375-453, and 494-580; these read RRVY…RPTD, DRIF…RAIQ, and QVVT…YPED.

It belongs to the splicing factor SR family. As to quaternary structure, component of the spliceosome. Interacts with SF1 in the nucleus.

The protein resides in the nucleus. It localises to the nucleus speckle. Necessary for the splicing of pre-mRNA. This Arabidopsis thaliana (Mouse-ear cress) protein is Splicing factor U2af large subunit B.